Here is a 189-residue protein sequence, read N- to C-terminus: GTPase NRas (189 aa).

Residues 10–18 and 29–30 contribute to the GTP site; these read GAGGVGKSA and VD. Residues 32-40 carry the Effector region motif; that stretch reads YDPTIEDSY. 57–61 contributes to the GTP binding site; sequence DTAGQ. The residue at position 89 (S89) is a Phosphoserine. 116 to 119 lines the GTP pocket; that stretch reads NKCD. The interval 166–185 is hypervariable region; the sequence is YRMKKLNSNDDGTQGCMGLP. Residue K170 forms a Glycyl lysine isopeptide (Lys-Gly) (interchain with G-Cter in ubiquitin) linkage. A lipid anchor (S-palmitoyl cysteine) is attached at C181. C186 carries the S-farnesyl cysteine lipid modification. Positions 187 to 189 are cleaved as a propeptide — removed in mature form; it reads VVM.

Belongs to the small GTPase superfamily. Ras family. In terms of assembly, interacts (active GTP-bound form preferentially) with RGS14. Interacts (active GTP-bound form) with RASSF7. Interacts (active GTP-bound form) with both SHOC2 and PP1c (all isoforms) to form a tertiary complex; SHOC2 and PP1c preferably bind M-Ras/MRAS, but they also bind K-Ras/KRAS, N-Ras/NRAS and H-Ras/HRAS. Post-translationally, palmitoylated by the ZDHHC9-GOLGA7 complex. Depalmitoylated by ABHD17A, ABHD17B and ABHD17C. A continuous cycle of de- and re-palmitoylation regulates rapid exchange between plasma membrane and Golgi. In terms of processing, acetylation at Lys-104 prevents interaction with guanine nucleotide exchange factors (GEFs). Ubiquitinated by the BCR(LZTR1) E3 ubiquitin ligase complex at Lys-170 in a non-degradative manner, leading to inhibit Ras signaling by decreasing Ras association with membranes. Post-translationally, phosphorylation at Ser-89 enhances NRAS association with its downstream effectors.

It localises to the cell membrane. Its subcellular location is the golgi apparatus membrane. The catalysed reaction is GTP + H2O = GDP + phosphate + H(+). With respect to regulation, alternates between an inactive form bound to GDP and an active form bound to GTP. Activated by a guanine nucleotide-exchange factor (GEF) and inactivated by a GTPase-activating protein (GAP). Ras proteins bind GDP/GTP and possess intrinsic GTPase activity. The chain is GTPase NRas (NRAS) from Cavia porcellus (Guinea pig).